A 173-amino-acid chain; its full sequence is Shikimate kinase (173 aa).

14-19 (GAGKST) is an ATP binding site. Ser18 is a binding site for Mg(2+). Positions 36, 60, and 82 each coordinate substrate. Lys120 is an ATP binding site. Arg140 contacts substrate.

Belongs to the shikimate kinase family. Monomer. Requires Mg(2+) as cofactor.

It is found in the cytoplasm. The catalysed reaction is shikimate + ATP = 3-phosphoshikimate + ADP + H(+). It functions in the pathway metabolic intermediate biosynthesis; chorismate biosynthesis; chorismate from D-erythrose 4-phosphate and phosphoenolpyruvate: step 5/7. Its function is as follows. Catalyzes the specific phosphorylation of the 3-hydroxyl group of shikimic acid using ATP as a cosubstrate. This is Shikimate kinase (aroK) from Wigglesworthia glossinidia brevipalpis.